Reading from the N-terminus, the 305-residue chain is Translation initiation factor eIF2B subunit alpha (305 aa).

This sequence belongs to the eIF-2B alpha/beta/delta subunits family. Component of the translation initiation factor 2B (eIF2B) complex which is a heterodecamer of two sets of five different subunits: alpha, beta, gamma, delta and epsilon. Subunits alpha, beta and delta comprise a regulatory subcomplex and subunits epsilon and gamma comprise a catalytic subcomplex. Within the complex, the hexameric regulatory complex resides at the center, with the two heterodimeric catalytic subcomplexes bound on opposite sides.

The protein localises to the cytoplasm. Its subcellular location is the cytosol. In terms of biological role, acts as a component of the translation initiation factor 2B (eIF2B) complex, which catalyzes the exchange of GDP for GTP on eukaryotic initiation factor 2 (eIF2) gamma subunit. Its guanine nucleotide exchange factor activity is repressed when bound to eIF2 complex phosphorylated on the alpha subunit, thereby limiting the amount of methionyl-initiator methionine tRNA available to the ribosome and consequently global translation is repressed. The sequence is that of Translation initiation factor eIF2B subunit alpha from Caenorhabditis elegans.